The sequence spans 386 residues: Ovalbumin (386 aa).

An N-acetylglycine modification is found at glycine 2. A signal peptide (not cleaved) is located at residues 22–48 (HHANENIFYCPIAIMSALAMVYLGAKD). The residue at position 69 (serine 69) is a Phosphoserine. Cysteines 74 and 121 form a disulfide. A Ca(2+)-binding site is contributed by glutamate 192. An N-linked (GlcNAc...) asparagine glycan is attached at asparagine 293. Serine 345 bears the Phosphoserine mark.

Belongs to the serpin family. Ov-serpin subfamily. As to quaternary structure, homodimer. Post-translationally, undergoes proteolytic cleavage first at the canonical P1-P1' site, and then at the P8-P7 site by subtilisin. In terms of tissue distribution, major protein of egg white. Expressed in the magnum of the oviduct (at protein level).

It localises to the secreted. Functionally, non-inhibitory serpin. Storage protein of egg white. The protein is Ovalbumin (SERPINB14) of Gallus gallus (Chicken).